The primary structure comprises 450 residues: Probable ATP-dependent RNA helicase MG425 homolog (450 aa).

Residues 3–31 (STFNELGVSPALIATLKDNNINQPTTIQQ) carry the Q motif motif. In terms of domain architecture, Helicase ATP-binding spans 34–206 (IPQFLQHQNL…KQITKNGIFL (173 aa)). 47–54 (SPTGTGKT) is an ATP binding site. The short motif at 154-157 (DEVD) is the DEVD box element. The Helicase C-terminal domain occupies 234–384 (RKKQALYSLV…PLRPMRLRLI (151 aa)). The interval 429-450 (MRQPERDMQKNKLHDSDWQSNM) is disordered. A compositionally biased stretch (basic and acidic residues) spans 430-450 (RQPERDMQKNKLHDSDWQSNM).

This sequence belongs to the DEAD box helicase family.

The enzyme catalyses ATP + H2O = ADP + phosphate + H(+). The sequence is that of Probable ATP-dependent RNA helicase MG425 homolog from Mycoplasma pneumoniae (strain ATCC 29342 / M129 / Subtype 1) (Mycoplasmoides pneumoniae).